Reading from the N-terminus, the 73-residue chain is Translation initiation factor IF-1 2 (73 aa).

Residues 1 to 72 (MAKEELVEFG…TKGRINYRHK (72 aa)) form the S1-like domain.

This sequence belongs to the IF-1 family. Component of the 30S ribosomal translation pre-initiation complex which assembles on the 30S ribosome in the order IF-2 and IF-3, IF-1 and N-formylmethionyl-tRNA(fMet); mRNA recruitment can occur at any time during PIC assembly.

It is found in the cytoplasm. In terms of biological role, one of the essential components for the initiation of protein synthesis. Stabilizes the binding of IF-2 and IF-3 on the 30S subunit to which N-formylmethionyl-tRNA(fMet) subsequently binds. Helps modulate mRNA selection, yielding the 30S pre-initiation complex (PIC). Upon addition of the 50S ribosomal subunit IF-1, IF-2 and IF-3 are released leaving the mature 70S translation initiation complex. This Cupriavidus pinatubonensis (strain JMP 134 / LMG 1197) (Cupriavidus necator (strain JMP 134)) protein is Translation initiation factor IF-1 2.